A 217-amino-acid chain; its full sequence is UPF0323 lipoprotein HPSH_01205 (217 aa).

Positions 1–27 (MKKPYRKISDYAIVGGLSALVMVSIVG) are cleaved as a signal peptide. Cysteine 28 is lipidated: N-palmitoyl cysteine. Cysteine 28 carries S-diacylglycerol cysteine lipidation. The segment covering 160–171 (QRTYKSPQAYQR) has biased composition (polar residues). The tract at residues 160 to 217 (QRTYKSPQAYQRSQNSFSKSAPSASSMGGASKGQSGFFGSSRPTSSPAVSSGTRGFNS) is disordered. Residues 172-210 (SQNSFSKSAPSASSMGGASKGQSGFFGSSRPTSSPAVSS) show a composition bias toward low complexity.

This sequence belongs to the UPF0323 family.

The protein localises to the cell membrane. The polypeptide is UPF0323 lipoprotein HPSH_01205 (Helicobacter pylori (strain Shi470)).